Here is a 310-residue protein sequence, read N- to C-terminus: Malate dehydrogenase (310 aa).

NAD(+) contacts are provided by residues 7–12 and Asp32; that span reads GAGNVG. Residues Arg81 and Arg87 each contribute to the substrate site. NAD(+) contacts are provided by residues Asn94 and 117–119; that span reads VSN. Residues Asn119 and Arg150 each contribute to the substrate site. His174 acts as the Proton acceptor in catalysis.

This sequence belongs to the LDH/MDH superfamily. MDH type 3 family. In terms of assembly, homotetramer; arranged as a dimer of dimers.

The catalysed reaction is (S)-malate + NAD(+) = oxaloacetate + NADH + H(+). Catalyzes the reversible oxidation of malate to oxaloacetate. The polypeptide is Malate dehydrogenase (Chlorobaculum tepidum (strain ATCC 49652 / DSM 12025 / NBRC 103806 / TLS) (Chlorobium tepidum)).